A 308-amino-acid chain; its full sequence is Very-long-chain enoyl-CoA reductase (308 aa).

Residues methionine 1–serine 86 lie on the Cytoplasmic side of the membrane. An N6-acetyllysine modification is found at lysine 22. Serine 58 is modified (phosphoserine). Lysine 60 is modified (N6-acetyllysine). Residues tryptophan 87–tyrosine 106 form a helical membrane-spanning segment. Topologically, residues phenylalanine 107–histidine 124 are lumenal. A helical membrane pass occupies residues threonine 125–phenylalanine 147. Over valine 148–leucine 158 the chain is Cytoplasmic. A helical membrane pass occupies residues arginine 159–asparagine 180. The Lumenal segment spans residues histidine 181 to tyrosine 189. Residues glycine 190–arginine 216 traverse the membrane as a helical segment. Over aspartate 217–cysteine 245 the chain is Cytoplasmic. A helical membrane pass occupies residues proline 246–threonine 262. The Lumenal portion of the chain corresponds to glutamine 263 to cysteine 264. The chain crosses the membrane as a helical span at residues leucine 265–glutamate 292. Residues phenylalanine 293–leucine 308 lie on the Cytoplasmic side of the membrane.

The protein belongs to the steroid 5-alpha reductase family. Interacts with ELOVL1 and LASS2. Interacts with HACD1 and HACD2 (via the third lumenal loop), but not with HACD3 and HACD4. Interacts with ELOVL1, ELOVL2, ELOVL3, ELOVL5 and ELOVL7 in the presence of acyl-CoA; interaction with HACD1/2 and that with ELOVLs are mutually exclusive. Post-translationally, glycosylated. As to expression, expressed in most tissues tested. Highly expressed in skeletal muscle.

The protein localises to the endoplasmic reticulum membrane. It catalyses the reaction a very-long-chain 2,3-saturated fatty acyl-CoA + NADP(+) = a very-long-chain (2E)-enoyl-CoA + NADPH + H(+). The catalysed reaction is octadecanoyl-CoA + NADP(+) = (2E)-octadecenoyl-CoA + NADPH + H(+). It carries out the reaction (2E,7Z,10Z,13Z,16Z)-docosapentaenoyl-CoA + NADPH + H(+) = (7Z,10Z,13Z,16Z)-docosatetraenoyl-CoA + NADP(+). The enzyme catalyses (2E,7Z,10Z,13Z,16Z,19Z)-docosahexaenoyl-CoA + NADPH + H(+) = (7Z,10Z,13Z,16Z,19Z)-docosapentaenoyl-CoA + NADP(+). It catalyses the reaction (2E,8Z,11Z,14Z)-eicosatetraenoyl-CoA + NADPH + H(+) = (8Z,11Z,14Z)-eicosatrienoyl-CoA + NADP(+). The catalysed reaction is (2E)-hexadecenoyl-CoA + NADPH + H(+) = hexadecanoyl-CoA + NADP(+). It participates in lipid metabolism; fatty acid biosynthesis. It functions in the pathway lipid metabolism; sphingolipid metabolism. In terms of biological role, involved in both the production of very long-chain fatty acids for sphingolipid synthesis and the degradation of the sphingosine moiety in sphingolipids through the sphingosine 1-phosphate metabolic pathway. Catalyzes the last of the four reactions of the long-chain fatty acids elongation cycle. This endoplasmic reticulum-bound enzymatic process, allows the addition of 2 carbons to the chain of long- and very long-chain fatty acids/VLCFAs per cycle. This enzyme reduces the trans-2,3-enoyl-CoA fatty acid intermediate to an acyl-CoA that can be further elongated by entering a new cycle of elongation. Thereby, it participates in the production of VLCFAs of different chain lengths that are involved in multiple biological processes as precursors of membrane lipids and lipid mediators. Catalyzes the saturation step of the sphingosine 1-phosphate metabolic pathway, the conversion of trans-2-hexadecenoyl-CoA to palmitoyl-CoA. This chain is Very-long-chain enoyl-CoA reductase (TECR), found in Homo sapiens (Human).